The chain runs to 227 residues: Prolactin (227 aa).

The signal sequence occupies residues 1–28; sequence MDSKWSRRTGSLLLLLVSNLLLCKSTAS. Residues C32 and C39 are joined by a disulfide bond. Phosphoserine is present on residues S54, S62, and S118. 2 disulfides stabilise this stretch: C86–C202 and C219–C227.

This sequence belongs to the somatotropin/prolactin family. Interacts with PRLR.

The protein resides in the secreted. In terms of biological role, prolactin acts primarily on the mammary gland by promoting lactation. The sequence is that of Prolactin (PRL) from Oryctolagus cuniculus (Rabbit).